Here is a 293-residue protein sequence, read N- to C-terminus: MDLGKVITAMVTPIHPEKNKVCKKRIHHLVNHLIDNGSDGLVIAGTTGESPTLSHDEKMKLFRQVVETNAGRAKLIAGTGSNNTAETIAFTKEVAELGGIDAVLVVAPYYNKPNQDGLYAHFVAVAEASDLPVVIYNIPGRSVVNIEPETIIRLAKLPNIIGVKESSGNLDNISKIIAETSDDFLVYSGDDSLTLPILAVGGNGVISVASHVVGNEMQEMMQAYESGDVKKAASIHRSLLPLMNGLFSVPNPAPTKYLLNQQGISVGPVRLPLVDLNAEQGTKLQAILEGLSK.

Threonine 47 contacts pyruvate. The active-site Proton donor/acceptor is tyrosine 136. Lysine 164 acts as the Schiff-base intermediate with substrate in catalysis. Residue isoleucine 206 coordinates pyruvate.

The protein belongs to the DapA family. In terms of assembly, homotetramer; dimer of dimers.

The protein localises to the cytoplasm. It catalyses the reaction L-aspartate 4-semialdehyde + pyruvate = (2S,4S)-4-hydroxy-2,3,4,5-tetrahydrodipicolinate + H2O + H(+). It participates in amino-acid biosynthesis; L-lysine biosynthesis via DAP pathway; (S)-tetrahydrodipicolinate from L-aspartate: step 3/4. Catalyzes the condensation of (S)-aspartate-beta-semialdehyde [(S)-ASA] and pyruvate to 4-hydroxy-tetrahydrodipicolinate (HTPA). The protein is 4-hydroxy-tetrahydrodipicolinate synthase of Listeria innocua serovar 6a (strain ATCC BAA-680 / CLIP 11262).